The sequence spans 519 residues: Glutamate--cysteine ligase (519 aa).

The protein belongs to the glutamate--cysteine ligase type 1 family. Type 1 subfamily.

It catalyses the reaction L-cysteine + L-glutamate + ATP = gamma-L-glutamyl-L-cysteine + ADP + phosphate + H(+). It functions in the pathway sulfur metabolism; glutathione biosynthesis; glutathione from L-cysteine and L-glutamate: step 1/2. This is Glutamate--cysteine ligase from Erwinia tasmaniensis (strain DSM 17950 / CFBP 7177 / CIP 109463 / NCPPB 4357 / Et1/99).